Here is a 170-residue protein sequence, read N- to C-terminus: ATP synthase subunit b (170 aa).

A helical membrane pass occupies residues 30–50 (FFFVLAIFLVVLGVIGTFVVP).

It belongs to the ATPase B chain family. In terms of assembly, F-type ATPases have 2 components, F(1) - the catalytic core - and F(0) - the membrane proton channel. F(1) has five subunits: alpha(3), beta(3), gamma(1), delta(1), epsilon(1). F(0) has three main subunits: a(1), b(2) and c(10-14). The alpha and beta chains form an alternating ring which encloses part of the gamma chain. F(1) is attached to F(0) by a central stalk formed by the gamma and epsilon chains, while a peripheral stalk is formed by the delta and b chains.

It localises to the cell membrane. In terms of biological role, f(1)F(0) ATP synthase produces ATP from ADP in the presence of a proton or sodium gradient. F-type ATPases consist of two structural domains, F(1) containing the extramembraneous catalytic core and F(0) containing the membrane proton channel, linked together by a central stalk and a peripheral stalk. During catalysis, ATP synthesis in the catalytic domain of F(1) is coupled via a rotary mechanism of the central stalk subunits to proton translocation. Functionally, component of the F(0) channel, it forms part of the peripheral stalk, linking F(1) to F(0). The chain is ATP synthase subunit b from Mycobacterium leprae (strain TN).